Consider the following 219-residue polypeptide: Ribonuclease HII (219 aa).

An RNase H type-2 domain is found at 22–219; the sequence is GLVAGVDEVG…LLAMRMEAVV (198 aa). 3 residues coordinate a divalent metal cation: Asp28, Glu29, and Asp125.

It belongs to the RNase HII family. Requires Mn(2+) as cofactor. It depends on Mg(2+) as a cofactor.

It is found in the cytoplasm. The catalysed reaction is Endonucleolytic cleavage to 5'-phosphomonoester.. Endonuclease that specifically degrades the RNA of RNA-DNA hybrids. The protein is Ribonuclease HII of Granulibacter bethesdensis (strain ATCC BAA-1260 / CGDNIH1).